Reading from the N-terminus, the 105-residue chain is MAVKKQFANFAEMLAGSPKPVLVDFYATWCGPCQMMAPILEQVGSHLRQQIQVVKIDTDKYPAIATQYQIQSLPTLVLFKQGQPVHRMEGVQQAAQLIQQLQVFV.

A Thioredoxin domain is found at 1 to 102 (MAVKKQFANF…QAAQLIQQLQ (102 aa)). C30 and C33 are oxidised to a cystine.

It belongs to the thioredoxin family.

The sequence is that of Thioredoxin-like protein slr0233 from Synechocystis sp. (strain ATCC 27184 / PCC 6803 / Kazusa).